The primary structure comprises 454 residues: Ribosomal protein uS12 methylthiotransferase RimO (454 aa).

The 112-residue stretch at 14-125 (SKVAFSHVGC…IAKVLDRVEK (112 aa)) folds into the MTTase N-terminal domain. Positions 23, 59, 88, 163, 167, and 170 each coordinate [4Fe-4S] cluster. Residues 149–378 (DKNKFVAYLR…ISVQQNISKD (230 aa)) form the Radical SAM core domain. In terms of domain architecture, TRAM spans 381 to 452 (QSYVGSKMKI…EYDLYGETLK (72 aa)).

Belongs to the methylthiotransferase family. RimO subfamily. Requires [4Fe-4S] cluster as cofactor.

The protein localises to the cytoplasm. The enzyme catalyses L-aspartate(89)-[ribosomal protein uS12]-hydrogen + (sulfur carrier)-SH + AH2 + 2 S-adenosyl-L-methionine = 3-methylsulfanyl-L-aspartate(89)-[ribosomal protein uS12]-hydrogen + (sulfur carrier)-H + 5'-deoxyadenosine + L-methionine + A + S-adenosyl-L-homocysteine + 2 H(+). In terms of biological role, catalyzes the methylthiolation of an aspartic acid residue of ribosomal protein uS12. The protein is Ribosomal protein uS12 methylthiotransferase RimO of Prochlorococcus marinus (strain MIT 9215).